Reading from the N-terminus, the 159-residue chain is SsrA-binding protein (159 aa).

The tract at residues 134–159 is disordered; the sequence is KLHDKRETSKERDWNRQKNRLLKERG. Residues 137–159 are compositionally biased toward basic and acidic residues; it reads DKRETSKERDWNRQKNRLLKERG.

The protein belongs to the SmpB family.

It localises to the cytoplasm. Required for rescue of stalled ribosomes mediated by trans-translation. Binds to transfer-messenger RNA (tmRNA), required for stable association of tmRNA with ribosomes. tmRNA and SmpB together mimic tRNA shape, replacing the anticodon stem-loop with SmpB. tmRNA is encoded by the ssrA gene; the 2 termini fold to resemble tRNA(Ala) and it encodes a 'tag peptide', a short internal open reading frame. During trans-translation Ala-aminoacylated tmRNA acts like a tRNA, entering the A-site of stalled ribosomes, displacing the stalled mRNA. The ribosome then switches to translate the ORF on the tmRNA; the nascent peptide is terminated with the 'tag peptide' encoded by the tmRNA and targeted for degradation. The ribosome is freed to recommence translation, which seems to be the essential function of trans-translation. The protein is SsrA-binding protein of Rhizobium meliloti (strain 1021) (Ensifer meliloti).